A 780-amino-acid polypeptide reads, in one-letter code: Semaphorin-3G (780 aa).

An N-terminal signal peptide occupies residues 1-22; sequence MDPSAWAICCLLGSLLFHVGIP. The Sema domain maps to 32–519; the sequence is RLRLSYRDLL…SPLGVARLQL (488 aa). Residue asparagine 44 is glycosylated (N-linked (GlcNAc...) asparagine). Cysteine 105 and cysteine 116 are disulfide-bonded. An N-linked (GlcNAc...) asparagine glycan is attached at asparagine 127. Intrachain disulfides connect cysteine 134–cysteine 143, cysteine 270–cysteine 382, cysteine 294–cysteine 342, cysteine 522–cysteine 540, and cysteine 603–cysteine 655. One can recognise an Ig-like C2-type domain in the interval 569–671; the sequence is PAVQCLGQGQ…FSQTVVRFAL (103 aa). N-linked (GlcNAc...) asparagine glycosylation is present at asparagine 652.

Belongs to the semaphorin family. Highly expressed in lung and kidney. Weakly expressed in brain.

Its subcellular location is the secreted. Its function is as follows. Has chemorepulsive activities for sympathetic axons. Ligand of NRP2. This is Semaphorin-3G (Sema3g) from Mus musculus (Mouse).